The primary structure comprises 76 residues: Attractin (76 aa).

Positions 1–18 (MKVAIIILSLALVAAVFA) are cleaved as a signal peptide. 3 cysteine pairs are disulfide-bonded: C22/C59, C31/C51, and C38/C44. A glycan (N-linked (GlcNAc...) asparagine) is linked at N26.

Binds to temptin and enticin. In terms of tissue distribution, produced by the albumen gland of the egg cordons.

It is found in the secreted. Its function is as follows. Water-borne pheromone that attract the marine mollusk Aplysia into breeding aggregations and coordinate male and female reproductive behavior within the aggregation. This Aplysia californica (California sea hare) protein is Attractin (ATT).